The chain runs to 345 residues: Probable dual-specificity RNA methyltransferase RlmN (345 aa).

Glutamate 90 serves as the catalytic Proton acceptor. One can recognise a Radical SAM core domain in the interval 96 to 327; that stretch reads QSYGNSVCVT…CIVRREFGHD (232 aa). Cysteine 103 and cysteine 332 form a disulfide bridge. Residues cysteine 110, cysteine 114, and cysteine 117 each coordinate [4Fe-4S] cluster. Residues 160-161, serine 192, 215-217, and asparagine 291 contribute to the S-adenosyl-L-methionine site; these read GE and SLH. The active-site S-methylcysteine intermediate is cysteine 332.

This sequence belongs to the radical SAM superfamily. RlmN family. Requires [4Fe-4S] cluster as cofactor.

Its subcellular location is the cytoplasm. It catalyses the reaction adenosine(2503) in 23S rRNA + 2 reduced [2Fe-2S]-[ferredoxin] + 2 S-adenosyl-L-methionine = 2-methyladenosine(2503) in 23S rRNA + 5'-deoxyadenosine + L-methionine + 2 oxidized [2Fe-2S]-[ferredoxin] + S-adenosyl-L-homocysteine. The enzyme catalyses adenosine(37) in tRNA + 2 reduced [2Fe-2S]-[ferredoxin] + 2 S-adenosyl-L-methionine = 2-methyladenosine(37) in tRNA + 5'-deoxyadenosine + L-methionine + 2 oxidized [2Fe-2S]-[ferredoxin] + S-adenosyl-L-homocysteine. Functionally, specifically methylates position 2 of adenine 2503 in 23S rRNA and position 2 of adenine 37 in tRNAs. In Spiroplasma citri, this protein is Probable dual-specificity RNA methyltransferase RlmN.